The chain runs to 194 residues: MLYKFTVLLLIYSYLRNLQAVNMENKDLIPNITIVCTVYKPDGKEFTATYSKLKDPIEIIEKEAQFLDRFINNTIKSQNRIPEEKRQIKDGDEVLYSIKLKHANDAGRHLIFKHGMELMDCLLDRKICENEYNGSFTYSSKTDQELLDNSVTEFIENSTEEEMMIIDNAIDDIMCDDCNLFEMVDDYYLKWVLY.

Residues 1-20 form the signal peptide; that stretch reads MLYKFTVLLLIYSYLRNLQA. Residues N31, N72, N133, and N157 are each glycosylated (N-linked (GlcNAc...) asparagine; by host).

This is an uncharacterized protein from Ostreid herpesvirus 1 (isolate France) (OsHV-1).